A 95-amino-acid chain; its full sequence is UPF0235 protein Pcar_0617 (95 aa).

The protein belongs to the UPF0235 family.

This Syntrophotalea carbinolica (strain DSM 2380 / NBRC 103641 / GraBd1) (Pelobacter carbinolicus) protein is UPF0235 protein Pcar_0617.